Here is a 229-residue protein sequence, read N- to C-terminus: 5'-methylthioadenosine/S-adenosylhomocysteine nucleosidase (229 aa).

Residue Glu12 is the Proton acceptor of the active site. Residues Gly78, Ile152, and Met173–Glu174 each bind substrate. The Proton donor role is filled by Asp197.

The protein belongs to the PNP/UDP phosphorylase family. MtnN subfamily.

The enzyme catalyses S-adenosyl-L-homocysteine + H2O = S-(5-deoxy-D-ribos-5-yl)-L-homocysteine + adenine. It catalyses the reaction S-methyl-5'-thioadenosine + H2O = 5-(methylsulfanyl)-D-ribose + adenine. The catalysed reaction is 5'-deoxyadenosine + H2O = 5-deoxy-D-ribose + adenine. The protein operates within amino-acid biosynthesis; L-methionine biosynthesis via salvage pathway; S-methyl-5-thio-alpha-D-ribose 1-phosphate from S-methyl-5'-thioadenosine (hydrolase route): step 1/2. Catalyzes the irreversible cleavage of the glycosidic bond in both 5'-methylthioadenosine (MTA) and S-adenosylhomocysteine (SAH/AdoHcy) to adenine and the corresponding thioribose, 5'-methylthioribose and S-ribosylhomocysteine, respectively. Also cleaves 5'-deoxyadenosine, a toxic by-product of radical S-adenosylmethionine (SAM) enzymes, into 5-deoxyribose and adenine. In Haemophilus influenzae (strain PittEE), this protein is 5'-methylthioadenosine/S-adenosylhomocysteine nucleosidase.